A 97-amino-acid chain; its full sequence is Putative membrane protein insertion efficiency factor (97 aa).

A disordered region spans residues 77–97 (VPDAPASPSPSSSCSCKGPHP). Residues 85–97 (SPSSSCSCKGPHP) are compositionally biased toward low complexity.

This sequence belongs to the UPF0161 family.

It is found in the cell inner membrane. In terms of biological role, could be involved in insertion of integral membrane proteins into the membrane. The protein is Putative membrane protein insertion efficiency factor of Xanthomonas euvesicatoria pv. vesicatoria (strain 85-10) (Xanthomonas campestris pv. vesicatoria).